The sequence spans 441 residues: Capsid protein (441 aa).

The tract at residues 26 to 63 is disordered; the sequence is DSKKKQPIYQNSSESEESETENKNFIYDFSSEEDFEEP. The Nuclear localization signal motif lies at 77 to 79; the sequence is KRK. The CCHC-type zinc-finger motif lies at 381 to 398; it reads CQCWLCHEEGHYANECPK.

It belongs to the caulimoviridae capsid protein family. Interacts (via nuclear localization signal) with host importin alpha.

The protein localises to the virion. The protein resides in the host nucleus. Its function is as follows. Self assembles to form an icosahedral capsid, about 50 nm in diameter, nm, composed of 420 subunits of the viral capsid protein. The capsid encapsulates the genomic dsDNA. Following virus entry into host cell, provides nuclear import of the viral genome. Virus particles do not enter the nucleus, but dock at the nuclear membrane through the interaction with host importins. This Soybean chlorotic mottle virus protein is Capsid protein.